We begin with the raw amino-acid sequence, 147 residues long: uncharacterized protein (147 aa).

The region spanning 44–147 (LVGYIDKEIH…LKSIKERLSI (104 aa)) is the HTH LytTR-type domain.

It is found in the cytoplasm. This is an uncharacterized protein from Staphylococcus aureus (strain MRSA252).